A 143-amino-acid polypeptide reads, in one-letter code: Large ribosomal subunit protein uL11 (143 aa).

This sequence belongs to the universal ribosomal protein uL11 family. Part of the ribosomal stalk of the 50S ribosomal subunit. Interacts with L10 and the large rRNA to form the base of the stalk. L10 forms an elongated spine to which L12 dimers bind in a sequential fashion forming a multimeric L10(L12)X complex. In terms of processing, one or more lysine residues are methylated.

Its function is as follows. Forms part of the ribosomal stalk which helps the ribosome interact with GTP-bound translation factors. In Burkholderia multivorans (strain ATCC 17616 / 249), this protein is Large ribosomal subunit protein uL11.